The chain runs to 412 residues: Imidazolonepropionase (412 aa).

Residues His-76 and His-78 each coordinate Fe(3+). The Zn(2+) site is built by His-76 and His-78. Residues Arg-85, Tyr-148, and His-181 each coordinate 4-imidazolone-5-propanoate. Residue Tyr-148 coordinates N-formimidoyl-L-glutamate. His-242 contributes to the Fe(3+) binding site. His-242 provides a ligand contact to Zn(2+). A 4-imidazolone-5-propanoate-binding site is contributed by Glu-245. Fe(3+) is bound at residue Asp-317. Asp-317 is a Zn(2+) binding site. Asn-319 and Gly-321 together coordinate N-formimidoyl-L-glutamate. Ser-322 lines the 4-imidazolone-5-propanoate pocket.

Belongs to the metallo-dependent hydrolases superfamily. HutI family. Zn(2+) is required as a cofactor. The cofactor is Fe(3+).

It localises to the cytoplasm. It carries out the reaction 4-imidazolone-5-propanoate + H2O = N-formimidoyl-L-glutamate. It functions in the pathway amino-acid degradation; L-histidine degradation into L-glutamate; N-formimidoyl-L-glutamate from L-histidine: step 3/3. Catalyzes the hydrolytic cleavage of the carbon-nitrogen bond in imidazolone-5-propanoate to yield N-formimidoyl-L-glutamate. It is the third step in the universal histidine degradation pathway. The chain is Imidazolonepropionase from Staphylococcus aureus (strain Mu50 / ATCC 700699).